Reading from the N-terminus, the 169-residue chain is Allophycocyanin subunit beta-18 (169 aa).

At asparagine 72 the chain carries N4-methylasparagine. Residue cysteine 82 coordinates (2R,3E)-phycocyanobilin.

Belongs to the phycobiliprotein family. Heterodimer of ApcE and this beta chain. Post-translationally, contains one covalently linked bilin chromophore. The chromophore is added by phycocyanobilin lyase CpcS 1.

It localises to the cellular thylakoid membrane. Its function is as follows. A variant beta-allophycocyanin (AP) which forms a complex with ApcE, a phycobilisome terminal emitter that influences energy transfer to photosystem II. In Nostoc sp. (strain PCC 7120 / SAG 25.82 / UTEX 2576), this protein is Allophycocyanin subunit beta-18 (apcF).